We begin with the raw amino-acid sequence, 459 residues long: tRNA modification GTPase MnmE (459 aa).

(6S)-5-formyl-5,6,7,8-tetrahydrofolate is bound by residues Arg23, Glu88, and Arg127. Positions Gly223–Phe381 constitute a TrmE-type G domain. Asn233 contributes to the K(+) binding site. Residues Asn233–Ser238, Thr252–Thr258, and Asp277–Gly280 contribute to the GTP site. Ser237 lines the Mg(2+) pocket. Thr252, Ile254, and Thr257 together coordinate K(+). Residue Thr258 participates in Mg(2+) binding. A (6S)-5-formyl-5,6,7,8-tetrahydrofolate-binding site is contributed by Lys459.

The protein belongs to the TRAFAC class TrmE-Era-EngA-EngB-Septin-like GTPase superfamily. TrmE GTPase family. In terms of assembly, homodimer. Heterotetramer of two MnmE and two MnmG subunits. Requires K(+) as cofactor.

It is found in the cytoplasm. Functionally, exhibits a very high intrinsic GTPase hydrolysis rate. Involved in the addition of a carboxymethylaminomethyl (cmnm) group at the wobble position (U34) of certain tRNAs, forming tRNA-cmnm(5)s(2)U34. The sequence is that of tRNA modification GTPase MnmE from Clostridium tetani (strain Massachusetts / E88).